The following is a 549-amino-acid chain: CTP synthase (549 aa).

The segment at 1-267 (MAKFVFITGG…CREVLDVLQL (267 aa)) is amidoligase domain. S13 serves as a coordination point for CTP. UTP is bound at residue S13. Residues 14-19 (SIGKGI) and D71 contribute to the ATP site. Mg(2+) is bound by residues D71 and E141. Residues 148–150 (DIE), 188–193 (KTKPTQ), and K224 contribute to the CTP site. Residues 188-193 (KTKPTQ) and K224 contribute to the UTP site. The region spanning 292–534 (KVALVGKYVQ…IEAAQQRLPD (243 aa)) is the Glutamine amidotransferase type-1 domain. G354 contributes to the L-glutamine binding site. The Nucleophile; for glutamine hydrolysis role is filled by C381. L-glutamine-binding positions include 382-385 (LGMQ), E405, and R462. Active-site residues include H507 and E509.

The protein belongs to the CTP synthase family. Homotetramer.

The catalysed reaction is UTP + L-glutamine + ATP + H2O = CTP + L-glutamate + ADP + phosphate + 2 H(+). It carries out the reaction L-glutamine + H2O = L-glutamate + NH4(+). The enzyme catalyses UTP + NH4(+) + ATP = CTP + ADP + phosphate + 2 H(+). Its pathway is pyrimidine metabolism; CTP biosynthesis via de novo pathway; CTP from UDP: step 2/2. Allosterically activated by GTP, when glutamine is the substrate; GTP has no effect on the reaction when ammonia is the substrate. The allosteric effector GTP functions by stabilizing the protein conformation that binds the tetrahedral intermediate(s) formed during glutamine hydrolysis. Inhibited by the product CTP, via allosteric rather than competitive inhibition. Catalyzes the ATP-dependent amination of UTP to CTP with either L-glutamine or ammonia as the source of nitrogen. Regulates intracellular CTP levels through interactions with the four ribonucleotide triphosphates. In Synechococcus sp. (strain CC9902), this protein is CTP synthase.